The chain runs to 295 residues: Tyrosine recombinase XerC (295 aa).

A Core-binding (CB) domain is found at 1-84 (MTLEEQFLSY…SLKSFYRFLT (84 aa)). Positions 105–289 (KLPEFFYQDE…SMQHLTVEYR (185 aa)) constitute a Tyr recombinase domain. Active-site residues include Arg145, Lys169, His241, Arg244, and His267. Tyr276 functions as the O-(3'-phospho-DNA)-tyrosine intermediate in the catalytic mechanism.

It belongs to the 'phage' integrase family. XerC subfamily. As to quaternary structure, forms a cyclic heterotetrameric complex composed of two molecules of XerC and two molecules of XerD.

Its subcellular location is the cytoplasm. Site-specific tyrosine recombinase, which acts by catalyzing the cutting and rejoining of the recombining DNA molecules. The XerC-XerD complex is essential to convert dimers of the bacterial chromosome into monomers to permit their segregation at cell division. It also contributes to the segregational stability of plasmids. The protein is Tyrosine recombinase XerC of Lactobacillus delbrueckii subsp. bulgaricus (strain ATCC 11842 / DSM 20081 / BCRC 10696 / JCM 1002 / NBRC 13953 / NCIMB 11778 / NCTC 12712 / WDCM 00102 / Lb 14).